The primary structure comprises 360 residues: Ribosomal RNA large subunit methyltransferase M (360 aa).

Residues serine 187, 220 to 223 (CPGG), aspartate 239, aspartate 259, and aspartate 276 contribute to the S-adenosyl-L-methionine site. Lysine 305 (proton acceptor) is an active-site residue.

The protein belongs to the class I-like SAM-binding methyltransferase superfamily. RNA methyltransferase RlmE family. RlmM subfamily. As to quaternary structure, monomer.

It localises to the cytoplasm. The enzyme catalyses cytidine(2498) in 23S rRNA + S-adenosyl-L-methionine = 2'-O-methylcytidine(2498) in 23S rRNA + S-adenosyl-L-homocysteine + H(+). Catalyzes the 2'-O-methylation at nucleotide C2498 in 23S rRNA. In Shewanella halifaxensis (strain HAW-EB4), this protein is Ribosomal RNA large subunit methyltransferase M.